A 130-amino-acid chain; its full sequence is Protein ApaG (130 aa).

The region spanning 3–127 (RALTRDIEVT…FSLDSPGLVR (125 aa)) is the ApaG domain.

This chain is Protein ApaG, found in Sinorhizobium fredii (strain NBRC 101917 / NGR234).